The following is a 1404-amino-acid chain: ABC transporter G family member 47 (1404 aa).

In terms of domain architecture, ABC transporter 1 spans Gly156–Glu423. Position 189-196 (Gly189–Thr196) interacts with ATP. An ABC transmembrane type-2 1 domain is found at Glu501 to Phe714. A run of 7 helical transmembrane segments spans residues Phe519–Phe539, Met565–Phe585, Thr607–Phe627, Phe638–Leu658, Val663–Ile683, Trp692–Asn712, and Val751–Phe771. An ABC transporter 2 domain is found at Ile808–Glu1059. Gly852–Thr859 contacts ATP. Positions Thr1132–Phe1346 constitute an ABC transmembrane type-2 2 domain. A run of 7 helical transmembrane segments spans residues Ile1152–Gly1172, Leu1183–Val1199, Leu1239–Tyr1259, Phe1266–Met1286, Thr1298–Leu1318, Ile1321–Leu1341, and Leu1373–Gly1393.

Belongs to the ABC transporter superfamily. ABCG family. PDR (TC 3.A.1.205) subfamily.

The protein localises to the membrane. Its function is as follows. May be a general defense protein. The sequence is that of ABC transporter G family member 47 from Oryza sativa subsp. japonica (Rice).